The following is a 745-amino-acid chain: 5-methyltetrahydropteroyltriglutamate--homocysteine methyltransferase (745 aa).

Residues 16 to 19 and K110 each bind 5-methyltetrahydropteroyltri-L-glutamate; that span reads REWK. L-homocysteine contacts are provided by residues 420–422 and E473; that span reads IGS. Residues 420–422 and E473 each bind L-methionine; that span reads IGS. W550 is a binding site for 5-methyltetrahydropteroyltri-L-glutamate. L-homocysteine is bound at residue D588. D588 provides a ligand contact to L-methionine. E594 lines the 5-methyltetrahydropteroyltri-L-glutamate pocket. Zn(2+)-binding residues include H630, C632, and E654. Residue H683 is the Proton donor of the active site. C715 provides a ligand contact to Zn(2+).

The protein belongs to the vitamin-B12 independent methionine synthase family. Requires Zn(2+) as cofactor.

The catalysed reaction is 5-methyltetrahydropteroyltri-L-glutamate + L-homocysteine = tetrahydropteroyltri-L-glutamate + L-methionine. The protein operates within amino-acid biosynthesis; L-methionine biosynthesis via de novo pathway; L-methionine from L-homocysteine (MetE route): step 1/1. In terms of biological role, catalyzes the transfer of a methyl group from 5-methyltetrahydrofolate to homocysteine resulting in methionine formation. The protein is 5-methyltetrahydropteroyltriglutamate--homocysteine methyltransferase of Streptococcus agalactiae serotype III (strain NEM316).